Here is a 263-residue protein sequence, read N- to C-terminus: Lens fiber major intrinsic protein (263 aa).

At 1 to 9 (MWELRSASF) the chain is on the cytoplasmic side. Residues 10–29 (WRAIFAEFFATLFYVFFGLG) traverse the membrane as a helical segment. Topologically, residues 30–41 (ASLRWAPGPLHV) are extracellular. A helical membrane pass occupies residues 42-59 (LQVALAFGLALATLVQAV). Residues 60–61 (GH) are Cytoplasmic-facing. The segment at residues 62–77 (ISGAHVNPAVTFAFLV) is an intramembrane region (discontinuously helical). Positions 68 to 70 (NPA) match the NPA 1 motif. Topologically, residues 78–82 (GSQMS) are cytoplasmic. A helical membrane pass occupies residues 83–106 (LLRAICYMAAQLLGAVAGAAVLYS). At 107 to 127 (VTPAAVRGNLALNTLHPGVSL) the chain is on the extracellular side. The chain crosses the membrane as a helical span at residues 128 to 148 (GQATTVEIFLTLQFVLCIFAT). Over 149-156 (YDERRNGR) the chain is Cytoplasmic. The helical transmembrane segment at 157 to 175 (LGSVALAVGFSLTLGHLFG) threads the bilayer. Residues 176–178 (MYY) are Extracellular-facing. The segment at residues 179–193 (TGAGMNPARSFAPAI) is an intramembrane region (discontinuously helical). The short motif at 184 to 186 (NPA) is the NPA 2 element. Topologically, residues 194 to 200 (LTRNFTN) are extracellular. A helical transmembrane segment spans residues 201 to 222 (HWVYWVGPIIGGGLASLLYDFL). The Cytoplasmic portion of the chain corresponds to 223–263 (LFPRLKSVSERLSILKGARPSDSNGQPEGTGEPVELKTQAL). The tract at residues 227-237 (LKSVSERLSIL) is interaction with CALM. Residues S235, S243, and S245 each carry the phosphoserine modification. Residues 240–263 (ARPSDSNGQPEGTGEPVELKTQAL) form a disordered region. Position 246 is a deamidated asparagine (N246).

Belongs to the MIP/aquaporin (TC 1.A.8) family. In terms of assembly, homotetramer; each monomer provides an independent water pore. Two homotetramers on opposing membranes can dimerize, forming a cell-cell junction. Interacts with CALM; the calcium-calmodulin/CALM complex interacts with the cytoplasmic domains of two aquaporins, leading to channel closure. Interacts with BFSP1 (via C-terminus); prevents calcium-dependent inhibition of the water channel activity. Post-translationally, subject to partial proteolytic cleavage in the eye lens core. Partial proteolysis promotes interactions between tetramers from adjoining membranes. In terms of processing, fatty acylated at Met-1 and Lys-238. The acyl modifications, in decreasing order of ion abundance, are: oleoyl (C18:1) &gt; palmitoyl (C16:0) &gt; stearoyl (C18:0) &gt; eicosenoyl (C20:1) &gt; dihomo-gamma-linolenoyl (C20:3) &gt; palmitoleoyl (C16:1) &gt; eicosadienoyl (C20:2).

Its subcellular location is the cell membrane. The protein resides in the cell junction. It carries out the reaction H2O(in) = H2O(out). Its activity is regulated as follows. The water channel activity is inhibited by calcium through calmodulin/CALM. Aquaporins form homotetrameric transmembrane channels, with each monomer independently mediating water transport across the plasma membrane along its osmotic gradient. Specifically expressed in lens fiber cells, this aquaporin is crucial for maintaining lens water homeostasis and transparency. Beyond water permeability, it also acts as a cell-to-cell adhesion molecule, forming thin junctions between lens fiber cells that are essential for maintaining the ordered structure and transparency of the lens. This chain is Lens fiber major intrinsic protein, found in Oryctolagus cuniculus (Rabbit).